Reading from the N-terminus, the 157-residue chain is Transcriptional repressor NrdR (157 aa).

The segment at 3–34 (CPFCRHPDSRVIDSRTSDDGLSIRRRRQCPEC) is a zinc-finger region. Residues 46–136 (LSVIKRSGVV…VYQAFDSLED (91 aa)) enclose the ATP-cone domain.

This sequence belongs to the NrdR family. It depends on Zn(2+) as a cofactor.

Negatively regulates transcription of bacterial ribonucleotide reductase nrd genes and operons by binding to NrdR-boxes. This chain is Transcriptional repressor NrdR, found in Leifsonia xyli subsp. xyli (strain CTCB07).